Consider the following 76-residue polypeptide: Bowman-Birk type proteinase inhibitor DE-3 (76 aa).

7 cysteine pairs are disulfide-bonded: C16/C70, C17/C32, C20/C66, C22/C30, C40/C47, C44/C59, and C49/C57.

This sequence belongs to the Bowman-Birk serine protease inhibitor family.

The sequence is that of Bowman-Birk type proteinase inhibitor DE-3 from Macrotyloma axillare (Perennial horse gram).